Consider the following 197-residue polypeptide: dTTP/UTP pyrophosphatase (197 aa).

The active-site Proton acceptor is the D70.

The protein belongs to the Maf family. YhdE subfamily. A divalent metal cation serves as cofactor.

The protein localises to the cytoplasm. The enzyme catalyses dTTP + H2O = dTMP + diphosphate + H(+). It catalyses the reaction UTP + H2O = UMP + diphosphate + H(+). Its function is as follows. Nucleoside triphosphate pyrophosphatase that hydrolyzes dTTP and UTP. May have a dual role in cell division arrest and in preventing the incorporation of modified nucleotides into cellular nucleic acids. The protein is dTTP/UTP pyrophosphatase of Pectobacterium atrosepticum (strain SCRI 1043 / ATCC BAA-672) (Erwinia carotovora subsp. atroseptica).